We begin with the raw amino-acid sequence, 276 residues long: Type II pantothenate kinase (276 aa).

8-15 (DAGGTLTK) contacts ATP. Glu-76 functions as the Proton acceptor in the catalytic mechanism. Residues Thr-105, 127–131 (GGTIM), Phe-143, and Ser-230 contribute to the ATP site.

Belongs to the type II pantothenate kinase family. As to quaternary structure, homodimer.

The protein localises to the cytoplasm. It catalyses the reaction (R)-pantothenate + ATP = (R)-4'-phosphopantothenate + ADP + H(+). It participates in cofactor biosynthesis; coenzyme A biosynthesis; CoA from (R)-pantothenate: step 1/5. Its function is as follows. Catalyzes the phosphorylation of pantothenate (Pan), the first step in CoA biosynthesis. In Bacillus cereus (strain ATCC 10987 / NRS 248), this protein is Type II pantothenate kinase.